The sequence spans 550 residues: Hydroxylamine reductase (550 aa).

[2Fe-2S] cluster-binding residues include Cys-3, Cys-6, Cys-18, and Cys-25. Residues His-249, Glu-273, Cys-317, Cys-405, Cys-433, Cys-458, Glu-492, and Lys-494 each contribute to the hybrid [4Fe-2O-2S] cluster site. A Cysteine persulfide modification is found at Cys-405.

Belongs to the HCP family. It depends on [2Fe-2S] cluster as a cofactor. Hybrid [4Fe-2O-2S] cluster serves as cofactor.

It is found in the cytoplasm. The enzyme catalyses A + NH4(+) + H2O = hydroxylamine + AH2 + H(+). In terms of biological role, catalyzes the reduction of hydroxylamine to form NH(3) and H(2)O. The chain is Hydroxylamine reductase from Pectobacterium atrosepticum (strain SCRI 1043 / ATCC BAA-672) (Erwinia carotovora subsp. atroseptica).